The following is a 434-amino-acid chain: Neuropeptide receptor 22 (434 aa).

The Extracellular portion of the chain corresponds to 1-55; the sequence is MDEGGGIGSSLLSRITTTASEIMMRNEPTTTENPAVQEMNHIYHLTPSMKMLCIL. A helical membrane pass occupies residues 56 to 76; it reads FYSILCVCCVYGNVLVILVIV. The Cytoplasmic segment spans residues 77–86; the sequence is YFKRLRTATN. The helical transmembrane segment at 87 to 107 threads the bilayer; sequence ILILNLAVADLLISVFCIPFS. The Extracellular segment spans residues 108 to 128; that stretch reads YWQVLIYDDQRWLFGSMMCSL. A disulfide bridge connects residues Cys-126 and Cys-204. A helical membrane pass occupies residues 129-149; sequence LAFLQAMAVFLSAWTLVVISF. Over 150–169 the chain is Cytoplasmic; the sequence is DRWMAIMFLLTPNIRITRRR. Residues 170-190 traverse the membrane as a helical segment; sequence ALYLVAATWIFSILMALPLLF. Residues 191–226 lie on the Extracellular side of the membrane; it reads TTRFFEDQDGLPNCGENWTYFGDSGEQVRKVYSSMV. Asn-207 carries N-linked (GlcNAc...) asparagine glycosylation. The chain crosses the membrane as a helical span at residues 227-247; it reads LILQYVVPQAVLIITYTHIGI. Over 248 to 277 the chain is Cytoplasmic; the sequence is KMWNSRVPGMQNGATKKMIVDRHESVKKLV. Residues 278–298 traverse the membrane as a helical segment; the sequence is PMVILISALFALCWLPLLILI. The Extracellular segment spans residues 299-310; sequence NVIPEFYPDINS. A helical membrane pass occupies residues 311-331; the sequence is WGYILYLWWFAHGLAMSHSMV. Over 332 to 434 the chain is Cytoplasmic; it reads NPIIYFIRNA…VRNNSANSLA (103 aa).

This sequence belongs to the G-protein coupled receptor 1 family. As to expression, expressed in many cells, mainly in the head region, with expression detected in the head muscles, I2 neurons, MC neurons, RIH neuron, AIA neurons, AUA neurons, ASK neurons, ASI neurons, a few B-type motorneurons in the posterior ventral nerve cord, pharyngeal muscles, body wall muscles, the intestine and a few classes of unidentified cells anterior to the nerve ring. Expression in the MC neurons is important to mediate suppression of feeding while expression in the RIH neuron is important for the facilitation of egg-laying. No expression detected in other tissues including hypodermis.

It is found in the cell membrane. Its function is as follows. Receptor for the LURY-1-1 and LURY-1-2 peptides which control food-related processes including feeding, lifespan, egg-laying and roaming behavior. Receptor for flp-7 which stimulates serotonin-induced fat loss. Serotonin induces secretion of flp-7 from neurons and binding to npr-22 which leads to induction of the atgp-1 lipase and subsequent fat loss. Acts in vitro as a receptor for the flp-7 FMRFamide-like neuropeptides TPMQRSSMVRF-amide, SPMQRSSMVRF-amide, SPMERSAMVRF-amide and SPMDRSKMVRF-amide. Also acts in vitro as a receptor for a number of other FMRFamide-like neuropeptides including the flp-1 neuropeptide PNFMRY-amide, the flp-9 neuropeptide KPSFVRF-amide, the flp-11 neuropeptides AMRNALVRF-amide, ASGGMRNALVRF-amide and NGAPQPFVRF-amide, the flp-13 neuropeptides AADGAPLIRF-amide, ASPSAPLIRF-amide, SPSAVPLIRF-amide, SAAAPLIRF-amide and ASSAPLIRF-amide, and the flp-22 neuropeptide SPSAKWMRF-amide. The SPMERSAMVRF-amide neuropeptide from flp-7 acts as the strongest in vitro activator of npr-22. The polypeptide is Neuropeptide receptor 22 (Caenorhabditis elegans).